The primary structure comprises 474 residues: Cryptochrome DASH (474 aa).

Positions 2–136 (DTAVVWFRDD…ALRQRWTHTL (135 aa)) constitute a Photolyase/cryptochrome alpha/beta domain. Residues 161–171 (EAAATVRDPRS) show a composition bias toward basic and acidic residues. The tract at residues 161–202 (EAAATVRDPRSAPETVPTPDGLTPGPVPTVESLGVSEPPTDD) is disordered.

The protein belongs to the DNA photolyase class-1 family. It depends on FAD as a cofactor. (6R)-5,10-methylene-5,6,7,8-tetrahydrofolate serves as cofactor.

May have a photoreceptor function. Binds DNA; probably functions as a transcriptional repressor. This is Cryptochrome DASH (cry) from Natronomonas pharaonis (strain ATCC 35678 / DSM 2160 / CIP 103997 / JCM 8858 / NBRC 14720 / NCIMB 2260 / Gabara) (Halobacterium pharaonis).